The following is an 86-amino-acid chain: Defensin-like protein 259 (86 aa).

The N-terminal stretch at 1–25 is a signal peptide; it reads MKNASLKLPLLIFILVITSNLGAEA. Intrachain disulfides connect Cys60–Cys76, Cys66–Cys83, and Cys70–Cys85.

Belongs to the DEFL family.

It localises to the secreted. The protein is Defensin-like protein 259 of Arabidopsis thaliana (Mouse-ear cress).